We begin with the raw amino-acid sequence, 538 residues long: Methionine--tRNA ligase (538 aa).

The 'HIGH' region motif lies at 21-31; sequence YYVNDAPHLGH. Zn(2+) is bound by residues Cys137, Cys140, Cys162, and His165. The 'KMSKS' region signature appears at 313–317; it reads KMSKS. ATP is bound at residue Lys316.

This sequence belongs to the class-I aminoacyl-tRNA synthetase family. MetG type 2A subfamily. Monomer. It depends on Zn(2+) as a cofactor.

The protein resides in the cytoplasm. It catalyses the reaction tRNA(Met) + L-methionine + ATP = L-methionyl-tRNA(Met) + AMP + diphosphate. Is required not only for elongation of protein synthesis but also for the initiation of all mRNA translation through initiator tRNA(fMet) aminoacylation. The sequence is that of Methionine--tRNA ligase from Streptomyces coelicolor (strain ATCC BAA-471 / A3(2) / M145).